Reading from the N-terminus, the 294-residue chain is Phosphatidylserine decarboxylase proenzyme (294 aa).

Residues Asp100, His157, and Ser261 each act as charge relay system; for autoendoproteolytic cleavage activity in the active site. The active-site Schiff-base intermediate with substrate; via pyruvic acid; for decarboxylase activity is the Ser261. A Pyruvic acid (Ser); by autocatalysis modification is found at Ser261.

It belongs to the phosphatidylserine decarboxylase family. PSD-B subfamily. Prokaryotic type I sub-subfamily. Heterodimer of a large membrane-associated beta subunit and a small pyruvoyl-containing alpha subunit. It depends on pyruvate as a cofactor. Is synthesized initially as an inactive proenzyme. Formation of the active enzyme involves a self-maturation process in which the active site pyruvoyl group is generated from an internal serine residue via an autocatalytic post-translational modification. Two non-identical subunits are generated from the proenzyme in this reaction, and the pyruvate is formed at the N-terminus of the alpha chain, which is derived from the carboxyl end of the proenzyme. The autoendoproteolytic cleavage occurs by a canonical serine protease mechanism, in which the side chain hydroxyl group of the serine supplies its oxygen atom to form the C-terminus of the beta chain, while the remainder of the serine residue undergoes an oxidative deamination to produce ammonia and the pyruvoyl prosthetic group on the alpha chain. During this reaction, the Ser that is part of the protease active site of the proenzyme becomes the pyruvoyl prosthetic group, which constitutes an essential element of the active site of the mature decarboxylase.

It is found in the cell membrane. It carries out the reaction a 1,2-diacyl-sn-glycero-3-phospho-L-serine + H(+) = a 1,2-diacyl-sn-glycero-3-phosphoethanolamine + CO2. Its pathway is phospholipid metabolism; phosphatidylethanolamine biosynthesis; phosphatidylethanolamine from CDP-diacylglycerol: step 2/2. In terms of biological role, catalyzes the formation of phosphatidylethanolamine (PtdEtn) from phosphatidylserine (PtdSer). In Histophilus somni (strain 2336) (Haemophilus somnus), this protein is Phosphatidylserine decarboxylase proenzyme.